The following is a 107-amino-acid chain: U-scoloptoxin(18)-Er1a (107 aa).

Positions methionine 1–alanine 21 are cleaved as a signal peptide.

This sequence belongs to the scoloptoxin-18 family. In terms of processing, contains 5 disulfide bonds. Expressed by the venom gland.

It is found in the secreted. The chain is U-scoloptoxin(18)-Er1a from Ethmostigmus rubripes (Giant centipede).